A 454-amino-acid polypeptide reads, in one-letter code: Laccase-3 (454 aa).

2 consecutive Plastocyanin-like domains span residues 1 to 95 (PGPT…GPAT) and 101 to 252 (DLGV…YSGA). The N-linked (GlcNAc...) asparagine glycan is linked to Asn-24. The Cu cation site is built by His-29, His-31, His-73, and His-75. Residues Asn-138, Asn-169, Asn-218, Asn-314, and Asn-334 are each glycosylated (N-linked (GlcNAc...) asparagine). In terms of domain architecture, Plastocyanin-like 3 spans 319 to 454 (DVDWKKPILQ…SEGLAVQFQG (136 aa)). 3 residues coordinate Cu cation: His-375, His-378, and His-380. The N-linked (GlcNAc...) asparagine glycan is linked to Asn-395. Residues His-437, Cys-438, His-439, and His-443 each coordinate Cu cation.

Belongs to the multicopper oxidase family. Cu cation is required as a cofactor.

It is found in the secreted. It carries out the reaction 4 hydroquinone + O2 = 4 benzosemiquinone + 2 H2O. Lignin degradation and detoxification of lignin-derived products. The polypeptide is Laccase-3 (lcc3) (Botryotinia fuckeliana (Noble rot fungus)).